Reading from the N-terminus, the 526-residue chain is Methane monooxygenase component A alpha chain (526 aa).

The Fe cation site is built by glutamate 114, glutamate 144, and histidine 147. Cysteine 151 is an active-site residue. Fe cation contacts are provided by glutamate 209, glutamate 243, and histidine 246.

This sequence belongs to the TmoA/XamoA family. As to quaternary structure, m.trichosporium has two forms of methane monooxygenase, a soluble and a membrane-bound type. The soluble type consists of four components (A to D): protein A, comprising three chains, in an alpha-2, beta-2, gamma-2 configuration, is a nonheme iron protein containing an unusual mu-hydroxo bridge structure at its active site and interacts with both oxygen and methane. Fe cation is required as a cofactor.

It carries out the reaction methane + NADH + O2 + H(+) = methanol + NAD(+) + H2O. It catalyses the reaction methane + NADPH + O2 + H(+) = methanol + NADP(+) + H2O. Its function is as follows. Responsible for the initial oxygenation of methane to methanol in methanotrophs. It also catalyzes the monohydroxylation of a variety of unactivated alkenes, alicyclic, aromatic and heterocyclic compounds. This Methylosinus trichosporium protein is Methane monooxygenase component A alpha chain (mmoX).